The chain runs to 131 residues: Aspartate 1-decarboxylase (131 aa).

Serine 25 serves as the catalytic Schiff-base intermediate with substrate; via pyruvic acid. Pyruvic acid (Ser) is present on serine 25. Threonine 57 serves as a coordination point for substrate. Tyrosine 58 functions as the Proton donor in the catalytic mechanism. 73–75 provides a ligand contact to substrate; it reads GSA.

It belongs to the PanD family. In terms of assembly, heterooctamer of four alpha and four beta subunits. It depends on pyruvate as a cofactor. Post-translationally, is synthesized initially as an inactive proenzyme, which is activated by self-cleavage at a specific serine bond to produce a beta-subunit with a hydroxyl group at its C-terminus and an alpha-subunit with a pyruvoyl group at its N-terminus.

The protein localises to the cytoplasm. It catalyses the reaction L-aspartate + H(+) = beta-alanine + CO2. Its pathway is cofactor biosynthesis; (R)-pantothenate biosynthesis; beta-alanine from L-aspartate: step 1/1. Functionally, catalyzes the pyruvoyl-dependent decarboxylation of aspartate to produce beta-alanine. The protein is Aspartate 1-decarboxylase of Leptothrix cholodnii (strain ATCC 51168 / LMG 8142 / SP-6) (Leptothrix discophora (strain SP-6)).